The chain runs to 968 residues: Alanine--tRNA ligase, cytoplasmic (968 aa).

Met1 bears the N-acetylmethionine mark. A phosphoserine mark is found at Ser3 and Ser8. Lys19 is subject to N6-acetyllysine. Residues Arg77, His95, Trp176, and 214-216 (IWN) each bind ATP. L-alanine-binding residues include Asn216 and Asp239. Gly243 contacts ATP. Phosphoserine is present on residues Ser399 and Ser555. 4 residues coordinate Zn(2+): His605, His609, Cys723, and His727. The short motif at 750–763 (RRIVAVTGAEAQKA) is the Nuclear localization signal element. Residue Lys876 is modified to N6-acetyllysine. At Lys943 the chain carries N6,N6,N6-trimethyllysine; alternate. N6,N6-dimethyllysine; alternate is present on Lys943. Lys943 carries the N6-methyllysine; alternate modification.

It belongs to the class-II aminoacyl-tRNA synthetase family. Monomer. Interacts with ANKRD16; the interaction is direct. Zn(2+) is required as a cofactor. ISGylated. In terms of processing, methylation at 'Lys-943' by METTL21C.

The protein localises to the cytoplasm. It localises to the nucleus. The catalysed reaction is tRNA(Ala) + L-alanine + ATP = L-alanyl-tRNA(Ala) + AMP + diphosphate. It carries out the reaction (S)-lactate + ATP + H(+) = (S)-lactoyl-AMP + diphosphate. It catalyses the reaction (S)-lactoyl-AMP + L-lysyl-[protein] = N(6)-[(S)-lactoyl]-L-lysyl-[protein] + AMP + 2 H(+). The protein lactyltransferase activity is inhibited by beta-alanine. Its function is as follows. Catalyzes the attachment of alanine to tRNA(Ala) in a two-step reaction: alanine is first activated by ATP to form Ala-AMP and then transferred to the acceptor end of tRNA(Ala). Also edits incorrectly charged tRNA(Ala) via its editing domain. In presence of high levels of lactate, also acts as a protein lactyltransferase that mediates lactylation of lysine residues in target proteins, such as TEAD1, TP53/p53 and YAP1. Protein lactylation takes place in a two-step reaction: lactate is first activated by ATP to form lactate-AMP and then transferred to lysine residues of target proteins. Acts as an inhibitor of TP53/p53 activity by catalyzing lactylation of TP53/p53. Acts as a positive regulator of the Hippo pathway by mediating lactylation of TEAD1 and YAP1. In Pongo abelii (Sumatran orangutan), this protein is Alanine--tRNA ligase, cytoplasmic (AARS1).